The following is a 151-amino-acid chain: Transcriptional repressor NrdR (151 aa).

A zinc finger spans residues 3 to 34 (CPFCHNDQSRVIDSRVIDSGSAIRRRRECTQC). Positions 46–136 (LLVVKRNGLT…VYKSFESADD (91 aa)) constitute an ATP-cone domain.

This sequence belongs to the NrdR family. Requires Zn(2+) as cofactor.

Functionally, negatively regulates transcription of bacterial ribonucleotide reductase nrd genes and operons by binding to NrdR-boxes. The polypeptide is Transcriptional repressor NrdR (Corynebacterium diphtheriae (strain ATCC 700971 / NCTC 13129 / Biotype gravis)).